The chain runs to 423 residues: Putative galacturan 1,4-alpha-galacturonidase C (423 aa).

The first 20 residues, 1–20 (MQLRASVLLSFLGLASVGHA), serve as a signal peptide directing secretion. 6 N-linked (GlcNAc...) asparagine glycosylation sites follow: Asn92, Asn98, Asn118, Asn156, Asn179, and Asn191. PbH1 repeat units follow at residues 215 to 236 (ATNIQLTNFVYQGGDDCIAIKP) and 238 to 258 (SYNIDIQNVTCRGGNGIAIGS). Residue Asp229 is the Proton donor of the active site. A disulfide bridge connects residues Cys231 and Cys248. 3 N-linked (GlcNAc...) asparagine glycosylation sites follow: Asn245, Asn344, and Asn362. Cys379 and Cys385 are oxidised to a cystine. The N-linked (GlcNAc...) asparagine glycan is linked to Asn400.

Belongs to the glycosyl hydrolase 28 family.

It localises to the secreted. It catalyses the reaction [(1-&gt;4)-alpha-D-galacturonosyl](n) + H2O = alpha-D-galacturonate + [(1-&gt;4)-alpha-D-galacturonosyl](n-1). Functionally, specific in hydrolyzing the terminal glycosidic bond of polygalacturonic acid and oligogalacturonates. The polypeptide is Putative galacturan 1,4-alpha-galacturonidase C (rgxC) (Aspergillus niger (strain ATCC MYA-4892 / CBS 513.88 / FGSC A1513)).